A 526-amino-acid chain; its full sequence is Peptide chain release factor 3 (526 aa).

A tr-type G domain is found at Gly8–Gln277. Residues Ser17–Thr24, Asp85–His89, and Asn139–Asp142 each bind GTP.

The protein belongs to the TRAFAC class translation factor GTPase superfamily. Classic translation factor GTPase family. PrfC subfamily.

The protein localises to the cytoplasm. Increases the formation of ribosomal termination complexes and stimulates activities of RF-1 and RF-2. It binds guanine nucleotides and has strong preference for UGA stop codons. It may interact directly with the ribosome. The stimulation of RF-1 and RF-2 is significantly reduced by GTP and GDP, but not by GMP. This Aliivibrio fischeri (strain MJ11) (Vibrio fischeri) protein is Peptide chain release factor 3.